A 183-amino-acid chain; its full sequence is ADP-ribosylation factor-like protein 5 (183 aa).

GTP is bound by residues 27–34, 70–74, and 129–132; these read GLNAAGKT, DLGGQ, and NKQD.

This sequence belongs to the small GTPase superfamily. Arf family.

Its function is as follows. May bind and exchange GTP and GDP. The sequence is that of ADP-ribosylation factor-like protein 5 (arl5) from Dictyostelium discoideum (Social amoeba).